The following is a 504-amino-acid chain: Maturase K (504 aa).

The protein belongs to the intron maturase 2 family. MatK subfamily.

The protein resides in the plastid. It localises to the chloroplast. Its function is as follows. Usually encoded in the trnK tRNA gene intron. Probably assists in splicing its own and other chloroplast group II introns. The chain is Maturase K from Pseudoturritis turrita (Tower rock-cress).